We begin with the raw amino-acid sequence, 756 residues long: Catalase-peroxidase (756 aa).

Residues 91 to 244 (WHSAGTYRTG…LAAVQMGLIY (154 aa)) constitute a cross-link (tryptophyl-tyrosyl-methioninium (Trp-Tyr) (with M-270)). Catalysis depends on His92, which acts as the Proton acceptor. The disordered stretch occupies residues 198-230 (AQKKMQQPGDGTLVAEPENHANEESRTASGERN). The segment covering 214-223 (PENHANEESR) has biased composition (basic and acidic residues). The segment at residues 244–270 (YVNPEGPEGVPDPVASAKDIRETFGRM) is a cross-link (tryptophyl-tyrosyl-methioninium (Tyr-Met) (with W-91)). His285 provides a ligand contact to heme b. Positions 371–390 (KNGAGAGKIPDAHDPSKRHA) are disordered.

The protein belongs to the peroxidase family. Peroxidase/catalase subfamily. Homodimer or homotetramer. It depends on heme b as a cofactor. Post-translationally, formation of the three residue Trp-Tyr-Met cross-link is important for the catalase, but not the peroxidase activity of the enzyme.

The catalysed reaction is H2O2 + AH2 = A + 2 H2O. It catalyses the reaction 2 H2O2 = O2 + 2 H2O. In terms of biological role, bifunctional enzyme with both catalase and broad-spectrum peroxidase activity. The protein is Catalase-peroxidase of Pseudomonas savastanoi pv. phaseolicola (strain 1448A / Race 6) (Pseudomonas syringae pv. phaseolicola (strain 1448A / Race 6)).